The following is a 227-amino-acid chain: E3 ubiquitin-protein ligase ZNRF1 (227 aa).

A disordered region spans residues 1-42 (MGGKQSTAARSRGPFPGVSTDDSAVPPPGGAPHFGHYRTGGG). Glycine 2 carries N-myristoyl glycine lipidation. Residues 2 to 10 (GGKQSTAAR) are required for endosomal and lysosomal localization and myristoylation. Serine 50, serine 52, and serine 53 each carry phosphoserine. A disordered region spans residues 68-105 (PFGLYTPASRGTGDSERAPGGGGSASDSTYAHGNGYQE). Tyrosine 103 is modified (phosphotyrosine; by SRC). Serine 123 is subject to Phosphoserine. Residues 184–225 (CVICLEELLQGDTIARLPCLCIYHKSCIDSWFEVNRSCPEHP) form an RING-type; atypical zinc finger.

As to quaternary structure, interacts with AKT1, GLUL and TUBB2A. Interacts with ZNRF2. Interacts (via its RING domain) with UBE2N. Interacts (when phosphorylated) with YWHAE. Post-translationally, N-myristoylation targets ZNRF1 to intracellular membranes. In terms of processing, phosphorylated by SRC at Tyr-103; leading to 'Lys-63'-linked ubiquitination of TLR3, lysosomal trafficking and degradation. As to expression, expressed primarily in the nervous system, with expression higher in developing brain relative to adult. Expressed at low levels in testis and thymus.

It is found in the endosome. The protein localises to the lysosome. The protein resides in the membrane. It localises to the cytoplasmic vesicle. Its subcellular location is the secretory vesicle. It is found in the synaptic vesicle membrane. It catalyses the reaction S-ubiquitinyl-[E2 ubiquitin-conjugating enzyme]-L-cysteine + [acceptor protein]-L-lysine = [E2 ubiquitin-conjugating enzyme]-L-cysteine + N(6)-ubiquitinyl-[acceptor protein]-L-lysine.. Its pathway is protein modification; protein ubiquitination. In terms of biological role, E3 ubiquitin-protein ligase that plays a role in different processes including cell differentiation, receptor recycling or regulation of inflammation. Mediates the ubiquitination of AKT1 and GLUL, thereby playing a role in neuron cells differentiation. Plays a role in the establishment and maintenance of neuronal transmission and plasticity. Regulates Schwann cells differentiation by mediating ubiquitination of GLUL. Promotes neurodegeneration by mediating 'Lys-48'-linked polyubiquitination and subsequent degradation of AKT1 in axons: degradation of AKT1 prevents AKT1-mediated phosphorylation of GSK3B, leading to GSK3B activation and phosphorylation of DPYSL2/CRMP2 followed by destabilization of microtubule assembly in axons. Ubiquitinates the Na(+)/K(+) ATPase alpha-1 subunit/ATP1A1 and thereby influences its endocytosis and/or degradation. Controls ligand-induced EGFR signaling via mediating receptor ubiquitination and recruitment of the ESCRT machinery. Acts as a negative feedback mechanism controlling TLR3 trafficking by mediating TLR3 'Lys-63'-linked polyubiquitination to reduce type I IFN production. Modulates inflammation by promoting caveolin-1/CAV1 ubiquitination and degradation to regulate TLR4-activated immune response. The chain is E3 ubiquitin-protein ligase ZNRF1 (ZNRF1) from Homo sapiens (Human).